Here is a 159-residue protein sequence, read N- to C-terminus: Small ribosomal subunit protein uS17 (159 aa).

The protein belongs to the universal ribosomal protein uS17 family.

Its subcellular location is the cytoplasm. The chain is Small ribosomal subunit protein uS17 (RPS11) from Zea mays (Maize).